A 367-amino-acid polypeptide reads, in one-letter code: Succinyl-diaminopimelate desuccinylase (367 aa).

His-64 serves as a coordination point for Zn(2+). Asp-66 is a catalytic residue. Residue Asp-95 participates in Zn(2+) binding. The active-site Proton acceptor is Glu-125. Zn(2+)-binding residues include Glu-126, Glu-154, and His-339.

This sequence belongs to the peptidase M20A family. DapE subfamily. Homodimer. Zn(2+) is required as a cofactor. It depends on Co(2+) as a cofactor.

The enzyme catalyses N-succinyl-(2S,6S)-2,6-diaminopimelate + H2O = (2S,6S)-2,6-diaminopimelate + succinate. The protein operates within amino-acid biosynthesis; L-lysine biosynthesis via DAP pathway; LL-2,6-diaminopimelate from (S)-tetrahydrodipicolinate (succinylase route): step 3/3. Functionally, catalyzes the hydrolysis of N-succinyl-L,L-diaminopimelic acid (SDAP), forming succinate and LL-2,6-diaminopimelate (DAP), an intermediate involved in the bacterial biosynthesis of lysine and meso-diaminopimelic acid, an essential component of bacterial cell walls. The protein is Succinyl-diaminopimelate desuccinylase of Sulfurovum sp. (strain NBC37-1).